A 324-amino-acid chain; its full sequence is Dolichyl-phosphate beta-glucosyltransferase (324 aa).

At methionine 1–glutamine 7 the chain is on the lumenal side. The chain crosses the membrane as a helical span at residues leucine 8–phenylalanine 28. The Cytoplasmic portion of the chain corresponds to isoleucine 29–serine 324.

The protein belongs to the glycosyltransferase 2 family.

It localises to the endoplasmic reticulum membrane. The enzyme catalyses a di-trans,poly-cis-dolichyl phosphate + UDP-alpha-D-glucose = a di-trans,poly-cis-dolichyl beta-D-glucosyl phosphate + UDP. It functions in the pathway protein modification; protein glycosylation. Its function is as follows. Dolichyl-phosphate beta-glucosyltransferase that operates in the biosynthetic pathway of dolichol-linked oligosaccharides, the glycan precursors employed in protein asparagine (N)-glycosylation. The assembly of dolichol-linked oligosaccharides begins on the cytosolic side of the endoplasmic reticulum membrane and finishes in its lumen. The sequential addition of sugars to dolichol pyrophosphate produces dolichol-linked oligosaccharides containing fourteen sugars, including two GlcNAcs, nine mannoses and three glucoses. Once assembled, the oligosaccharide is transferred from the lipid to nascent proteins by oligosaccharyltransferases. Dolichyl-phosphate beta-glucosyltransferase produces dolichyl beta-D-glucosyl phosphate/Dol-P-Glc, the glucose donor substrate used sequentially by ALG6, ALG8 and ALG10 to add glucose residues on top of the Man(9)GlcNAc(2)-PP-Dol structure. These are the three last steps in the biosynthetic pathway of dolichol-linked oligosaccharides to produce Glc(3)Man(9)GlcNAc(2)-PP-Dol. The enzyme is most probably active on the cytoplasmic side of the endoplasmic reticulum while its product Dol-P-Glc is the substrate for ALG6, ALG8 and ALG11 in the lumen of the endoplasmic reticulum. The chain is Dolichyl-phosphate beta-glucosyltransferase from Mus musculus (Mouse).